Consider the following 384-residue polypeptide: Aurora kinase (384 aa).

2 stretches are compositionally biased toward polar residues: residues 1–12 and 19–29; these read MSYPNNKENSNN and SVPSKQPQRVL. The segment at 1-100 is disordered; sequence MSYPNNKENS…SSSSSSSQSV (100 aa). Residues 30 to 99 show a composition bias toward low complexity; that stretch reads QQQNTNINNH…SSSSSSSSQS (70 aa). Residues 110-360 enclose the Protein kinase domain; sequence FDIGKLLGMG…LKDVINHPWI (251 aa). ATP-binding positions include 116–124 and Lys-139; that span reads LGMGRFGHV. The Proton acceptor role is filled by Asp-233.

It belongs to the protein kinase superfamily. Ser/Thr protein kinase family. Aurora subfamily. In terms of assembly, interacts with icpA. Forms a complex at the central spindle.

The protein localises to the cytoplasm. It localises to the chromosome. The protein resides in the centromere. It is found in the cytoskeleton. Its subcellular location is the spindle pole. The protein localises to the cleavage furrow. It localises to the cell projection. The protein resides in the neuron projection. The enzyme catalyses L-seryl-[protein] + ATP = O-phospho-L-seryl-[protein] + ADP + H(+). It carries out the reaction L-threonyl-[protein] + ATP = O-phospho-L-threonyl-[protein] + ADP + H(+). Functionally, part of a chromosomal passenger complex. The protein is Aurora kinase (aurK) of Dictyostelium discoideum (Social amoeba).